We begin with the raw amino-acid sequence, 244 residues long: Monothiol glutaredoxin-4 (244 aa).

Residues 3-110 (VVEIKSQDQF…FVKSLEILSN (108 aa)) enclose the Thioredoxin domain. Positions 116-143 (ANNAKGPKSTSDEESSGSSDDEEDETEE) are disordered. Residues 127-143 (DEESSGSSDDEEDETEE) show a composition bias toward acidic residues. Residues 146 to 244 (NARLVKLVQA…DPEYFQHALQ (99 aa)) enclose the Glutaredoxin domain. Lys-163 is a glutathione binding site. Cys-171 contacts [2Fe-2S] cluster. Residues Arg-200, Phe-212, and 225 to 226 (LD) contribute to the glutathione site.

Belongs to the glutaredoxin family. Monothiol subfamily. In terms of assembly, homodimer. Heterodimer with FRA2.

Its function is as follows. Monothiol glutaredoxin involved in the biogenesis of iron-sulfur clusters. Binds one iron-sulfur cluster per dimer. The iron-sulfur cluster is bound between subunits, and is complexed by a bound glutathione and a cysteine residue from each subunit. The chain is Monothiol glutaredoxin-4 (GRX4) from Saccharomyces cerevisiae (strain ATCC 204508 / S288c) (Baker's yeast).